The sequence spans 490 residues: Betaine aldehyde dehydrogenase (490 aa).

Asparagine 93 is a binding site for K(+). 150–152 (GAW) provides a ligand contact to NAD(+). The Charge relay system role is filled by lysine 162. 176–179 (KPSE) provides a ligand contact to NAD(+). Valine 180 is a K(+) binding site. 230–233 (GTAT) provides a ligand contact to NAD(+). Leucine 246 is a K(+) binding site. Glutamate 252 serves as the catalytic Proton acceptor. NAD(+) is bound by residues glycine 254, cysteine 286, and glutamate 387. Cysteine 286 functions as the Nucleophile in the catalytic mechanism. Cysteine 286 carries the cysteine sulfenic acid (-SOH) modification. Residues lysine 457 and glycine 460 each coordinate K(+). Residue glutamate 464 is the Charge relay system of the active site.

This sequence belongs to the aldehyde dehydrogenase family. Dimer of dimers. It depends on K(+) as a cofactor.

The catalysed reaction is betaine aldehyde + NAD(+) + H2O = glycine betaine + NADH + 2 H(+). The protein operates within amine and polyamine biosynthesis; betaine biosynthesis via choline pathway; betaine from betaine aldehyde: step 1/1. Functionally, involved in the biosynthesis of the osmoprotectant glycine betaine. Catalyzes the irreversible oxidation of betaine aldehyde to the corresponding acid. This is Betaine aldehyde dehydrogenase from Xanthomonas euvesicatoria pv. vesicatoria (strain 85-10) (Xanthomonas campestris pv. vesicatoria).